The sequence spans 359 residues: Histidinol-phosphate aminotransferase (359 aa).

N6-(pyridoxal phosphate)lysine is present on K217.

It belongs to the class-II pyridoxal-phosphate-dependent aminotransferase family. Histidinol-phosphate aminotransferase subfamily. Homodimer. It depends on pyridoxal 5'-phosphate as a cofactor.

It catalyses the reaction L-histidinol phosphate + 2-oxoglutarate = 3-(imidazol-4-yl)-2-oxopropyl phosphate + L-glutamate. It participates in amino-acid biosynthesis; L-histidine biosynthesis; L-histidine from 5-phospho-alpha-D-ribose 1-diphosphate: step 7/9. In Citrobacter koseri (strain ATCC BAA-895 / CDC 4225-83 / SGSC4696), this protein is Histidinol-phosphate aminotransferase.